The chain runs to 411 residues: MLNILPFFLFFLPFLIGNNRICVAVKTGFVGRNGTQFVLNGEQVYLNGFNAYWMMTTAADTASKGRATVTTALRQASAVGMNVARIWGFNEGDYIPLQISPGSYSEDVFKGLDFVVYEAGRFNIKLIISLVNNFEDYGGRKKYVEWAGLDEPDEFYTNSAVKQFYKNHVKTVLTRKNTITGRMYKDDPTIFSWELINEPRCNDSTASNILQDWVKEMASYVKSIDSNHLLEIGLEGFYGESIPERTVYNPGGRVLTGTDFITNNQIPDIDFATIHIYPDSWLPLQSSRTGEQDTFVDRWIGAHIEDCDNIIKKPLLITEFGKSSKYPGFSLEKRNKFFQRVYDVIYDSARAGGSCTGGVFWQLTTNRTGLLGDGYEVFMQAGPNTTAQLIADQSSKLKNLKYPPLVTHSAE.

The first 17 residues, 1-17, serve as a signal peptide directing secretion; sequence MLNILPFFLFFLPFLIG. A glycan (N-linked (GlcNAc...) asparagine) is linked at N33. Substrate-binding residues include W87 and N197. Catalysis depends on E198, which acts as the Proton donor. N-linked (GlcNAc...) asparagine glycosylation is present at N202. Y277 contacts substrate. The active-site Nucleophile is the E319. W361 lines the substrate pocket. Residues N366 and N384 are each glycosylated (N-linked (GlcNAc...) asparagine).

It belongs to the glycosyl hydrolase 5 (cellulase A) family. Expressed in roots, stems and flowers.

It localises to the secreted. The catalysed reaction is Random hydrolysis of (1-&gt;4)-beta-D-mannosidic linkages in mannans, galactomannans and glucomannans.. This chain is Mannan endo-1,4-beta-mannosidase 1 (MAN1), found in Arabidopsis thaliana (Mouse-ear cress).